The following is a 489-amino-acid chain: 5'-AMP-activated protein kinase subunit gamma-3 (489 aa).

The disordered stretch occupies residues 1–113 (MEPGLEHALR…PAGVGTPPTG (113 aa)). Positions 34–46 (SSSWPSPAVTSSS) are enriched in low complexity. The segment covering 50-62 (RGKRRAKALRWTR) has biased composition (basic residues). CBS domains are found at residues 197–258 (MATS…RSPL), 280–340 (CFKP…LLPR), and 355–415 (TFRD…HLDM). Residues Arg-225, 240 to 245 (MLTITD), Val-285, 306 to 307 (HR), and Lys-325 each bind ADP. Residues Arg-225, 240–245 (MLTITD), Val-285, His-306, 306–307 (HR), Lys-325, Thr-355, Ala-360, 381–382 (SA), 397–400 (SRFD), Arg-424, Leu-432, His-453, 453–454 (HR), and 469–472 (SLSD) each bind AMP. ATP contacts are provided by residues Arg-225, 240-245 (MLTITD), Val-285, 306-307 (HR), Arg-307, and Lys-325. The AMPK pseudosubstrate signature appears at 293–314 (LFEAVYTLIKNRIHRLPVLDPV). ADP-binding positions include 397–400 (SRFD), Arg-424, Leu-432, and 453–454 (HR). ATP-binding positions include 397-400 (SRFD), Arg-424, Leu-432, and 453-454 (HR). Residues 427–486 (CLEGVLSCQPHESLGEVIDRIAREQVHRLVLVDETQHLLGVVSLSDILQALVLSPAGIDA) form the CBS 4 domain.

This sequence belongs to the 5'-AMP-activated protein kinase gamma subunit family. As to quaternary structure, AMPK is a heterotrimer of an alpha catalytic subunit (PRKAA1 or PRKAA2), a beta (PRKAB1 or PRKAB2) and a gamma non-catalytic subunits (PRKAG1, PRKAG2 or PRKAG3). Interacts with FNIP1 and FNIP2. Phosphorylated by ULK1; leading to negatively regulate AMPK activity and suggesting the existence of a regulatory feedback loop between ULK1 and AMPK. In terms of processing, glycosylated; O-GlcNAcylated by OGT, promoting the AMP-activated protein kinase (AMPK) activity. In terms of tissue distribution, skeletal muscle, with weak expression in heart and pancreas.

Functionally, AMP/ATP-binding subunit of AMP-activated protein kinase (AMPK), an energy sensor protein kinase that plays a key role in regulating cellular energy metabolism. In response to reduction of intracellular ATP levels, AMPK activates energy-producing pathways and inhibits energy-consuming processes: inhibits protein, carbohydrate and lipid biosynthesis, as well as cell growth and proliferation. AMPK acts via direct phosphorylation of metabolic enzymes, and by longer-term effects via phosphorylation of transcription regulators. AMPK also acts as a regulator of cellular polarity by remodeling the actin cytoskeleton; probably by indirectly activating myosin. The AMPK gamma3 subunit is a non-catalytic subunit with a regulatory role in muscle energy metabolism. It mediates binding to AMP, ADP and ATP, leading to AMPK activation or inhibition: AMP-binding results in allosteric activation of alpha catalytic subunit (PRKAA1 or PRKAA2) both by inducing phosphorylation and preventing dephosphorylation of catalytic subunits. ADP also stimulates phosphorylation, without stimulating already phosphorylated catalytic subunit. ATP promotes dephosphorylation of catalytic subunit, rendering the AMPK enzyme inactive. The polypeptide is 5'-AMP-activated protein kinase subunit gamma-3 (PRKAG3) (Homo sapiens (Human)).